Consider the following 397-residue polypeptide: Acetate kinase (397 aa).

A Mg(2+)-binding site is contributed by Asn-8. Lys-15 is an ATP binding site. Substrate is bound at residue Arg-89. Asp-146 (proton donor/acceptor) is an active-site residue. ATP is bound by residues His-206–Gly-210, Asp-283–Arg-285, and Gly-331–Asn-335. Residue Glu-383 coordinates Mg(2+).

The protein belongs to the acetokinase family. In terms of assembly, homodimer. Mg(2+) serves as cofactor. Requires Mn(2+) as cofactor.

The protein localises to the cytoplasm. It catalyses the reaction acetate + ATP = acetyl phosphate + ADP. Its pathway is metabolic intermediate biosynthesis; acetyl-CoA biosynthesis; acetyl-CoA from acetate: step 1/2. In terms of biological role, catalyzes the formation of acetyl phosphate from acetate and ATP. Can also catalyze the reverse reaction. The sequence is that of Acetate kinase from Streptococcus agalactiae serotype III (strain NEM316).